The chain runs to 207 residues: Lipid A acyltransferase PagP (207 aa).

The first 24 residues, 1–24 (MKFDLTTAYTLSIPLLASSGTVLA), serve as a signal peptide directing secretion. Catalysis depends on residues His-79, Asp-122, and Ser-123.

The protein belongs to the lipid A palmitoyltransferase family. As to quaternary structure, homodimer.

The protein resides in the cell outer membrane. It carries out the reaction a lipid A + a 1,2-diacyl-sn-glycero-3-phosphocholine = a hepta-acyl lipid A + a 2-acyl-sn-glycero-3-phosphocholine. It catalyses the reaction a lipid IVA + a 1,2-diacyl-sn-glycero-3-phosphocholine = a lipid IVB + a 2-acyl-sn-glycero-3-phosphocholine. The catalysed reaction is a lipid IIA + a 1,2-diacyl-sn-glycero-3-phosphocholine = a lipid IIB + a 2-acyl-sn-glycero-3-phosphocholine. In terms of biological role, transfers a fatty acid residue from the sn-1 position of a phospholipid to the N-linked hydroxyfatty acid chain on the proximal unit of lipid A or its precursors. This Photorhabdus asymbiotica subsp. asymbiotica (strain ATCC 43949 / 3105-77) (Xenorhabdus luminescens (strain 2)) protein is Lipid A acyltransferase PagP.